The primary structure comprises 311 residues: Energy-coupling factor transporter ATP-binding protein EcfA (311 aa).

In terms of domain architecture, ABC transporter spans 2–237; the sequence is IELRDLSYSY…AELIRRASLR (236 aa). Residue 35–42 coordinates ATP; it reads GPNGAGKS.

It belongs to the ABC transporter superfamily. Energy-coupling factor EcfA family. In terms of assembly, forms a stable energy-coupling factor (ECF) transporter complex composed of 2 membrane-embedded substrate-binding proteins (S component), 2 ATP-binding proteins (A component) and 2 transmembrane proteins (T component).

The protein localises to the cell membrane. ATP-binding (A) component of a common energy-coupling factor (ECF) ABC-transporter complex. Unlike classic ABC transporters this ECF transporter provides the energy necessary to transport a number of different substrates. This chain is Energy-coupling factor transporter ATP-binding protein EcfA, found in Methanothermobacter thermautotrophicus (strain ATCC 29096 / DSM 1053 / JCM 10044 / NBRC 100330 / Delta H) (Methanobacterium thermoautotrophicum).